A 324-amino-acid chain; its full sequence is Interactor of constitutive active ROPs 4 (324 aa).

Disordered regions lie at residues 1 to 74 (MPKP…SGLE), 91 to 156 (LAKA…ASKE), 175 to 201 (SLSE…KAKE), and 289 to 324 (FVGS…KGQK). The span at 13 to 28 (QRQSPRLRTSLLSTSS) shows a compositional bias: low complexity. 3 stretches are compositionally biased toward basic and acidic residues: residues 29–50 (DPHH…DRRS), 95–106 (EAAKKRAQEELH), and 118–156 (PERD…ASKE). Residues 62–266 (SQKKLGSRIS…ADAAAAVLSG (205 aa)) adopt a coiled-coil conformation. Residues 313 to 324 (MFGDLWKKKGQK) are compositionally biased toward basic and acidic residues.

Belongs to the ICR family. Interacts with ARAC11 in vitro.

Functionally, acts as a scaffold, mediating interaction of ROPs with different proteins. This chain is Interactor of constitutive active ROPs 4 (ICR4), found in Arabidopsis thaliana (Mouse-ear cress).